The following is a 137-amino-acid chain: SPbeta prophage-derived disulfide bond formation protein A (137 aa).

The N-terminal stretch at 1–25 is a signal peptide; it reads MKKWIVLFLVLIAAAISIFVYVSTG. Residues 26–136 form the Thioredoxin domain; the sequence is SEKPFYNDIN…IEKFFDKNGD (111 aa). Cysteine 58 and cysteine 61 are disulfide-bonded.

It belongs to the thioredoxin family.

The protein resides in the secreted. Its function is as follows. Unknown; dispensable for production of the lantibiotic sublancin 168 and for competence for DNA uptake. The polypeptide is SPbeta prophage-derived disulfide bond formation protein A (bdbA) (Bacillus subtilis (strain 168)).